A 192-amino-acid polypeptide reads, in one-letter code: MNTQDVINIFKQADAILEGHFILTSGRHSATFLQKAKVFMHADLTEKLCRGLAQEIKRHVEGKIDYVVGPAIGGLIPSYETSRHLGVPSIWVERENGVFRLRRFEVEKGARVVIVEDIVTTGLSIRETIEALVAVEADVVASACIIDRSGGKVDVGVPLIALAEYEIVSYTRDTLPHELSKIPAVKPGSRDI.

Glu116–Ser124 serves as a coordination point for 5-phospho-alpha-D-ribose 1-diphosphate. 2 residues coordinate orotate: Thr120 and Arg148.

It belongs to the purine/pyrimidine phosphoribosyltransferase family. PyrE subfamily. Homodimer. Mg(2+) is required as a cofactor.

It carries out the reaction orotidine 5'-phosphate + diphosphate = orotate + 5-phospho-alpha-D-ribose 1-diphosphate. It functions in the pathway pyrimidine metabolism; UMP biosynthesis via de novo pathway; UMP from orotate: step 1/2. In terms of biological role, catalyzes the transfer of a ribosyl phosphate group from 5-phosphoribose 1-diphosphate to orotate, leading to the formation of orotidine monophosphate (OMP). In Bartonella bacilliformis (strain ATCC 35685 / KC583 / Herrer 020/F12,63), this protein is Orotate phosphoribosyltransferase.